A 326-amino-acid polypeptide reads, in one-letter code: MGFLSPMHPCRPPTQRRMAAGNHSTVTEFILKGLTKRADLQLPLFLLFLGIYLVTIVGNLGMITLICLNSQLHTPMYYFLSNLSLMDLCYSSVITPKMLVNFVSEKNIISYAGCMSQLYFFLVFVIAECYMLTVMAYDRYVAICHPLLYNIIMSHHTCLLLVAVVYAIGLIGSTIETGLMLKLPYCEHLISHYFCDILPLMKLSCSSTYDVEMTVFFSAGFNIIVTSLTVLVSYTFILSSILGISTTEGRSKAFSTCSSHLAAVGMFYGSTAFMYLKPSTISSLTQENVASVFYTTVIPMLNPLIYSLRNKEVKAAVQKTLRGKLF.

The Extracellular portion of the chain corresponds to 1 to 45; it reads MGFLSPMHPCRPPTQRRMAAGNHSTVTEFILKGLTKRADLQLPLF. Asparagine 22 carries N-linked (GlcNAc...) asparagine glycosylation. A helical transmembrane segment spans residues 46–66; it reads LLFLGIYLVTIVGNLGMITLI. Over 67 to 77 the chain is Cytoplasmic; it reads CLNSQLHTPMY. Residues 78–100 traverse the membrane as a helical segment; it reads YFLSNLSLMDLCYSSVITPKMLV. Over 101 to 116 the chain is Extracellular; sequence NFVSEKNIISYAGCMS. An intrachain disulfide couples cysteine 114 to cysteine 195. Residues 117–137 traverse the membrane as a helical segment; that stretch reads QLYFFLVFVIAECYMLTVMAY. The Cytoplasmic segment spans residues 138 to 150; that stretch reads DRYVAICHPLLYN. The helical transmembrane segment at 151 to 171 threads the bilayer; it reads IIMSHHTCLLLVAVVYAIGLI. Residues 172-222 are Extracellular-facing; that stretch reads GSTIETGLMLKLPYCEHLISHYFCDILPLMKLSCSSTYDVEMTVFFSAGFN. Residues 223 to 243 form a helical membrane-spanning segment; the sequence is IIVTSLTVLVSYTFILSSILG. Topologically, residues 244-260 are cytoplasmic; the sequence is ISTTEGRSKAFSTCSSH. The chain crosses the membrane as a helical span at residues 261-281; that stretch reads LAAVGMFYGSTAFMYLKPSTI. The Extracellular portion of the chain corresponds to 282–287; that stretch reads SSLTQE. Residues 288 to 308 traverse the membrane as a helical segment; it reads NVASVFYTTVIPMLNPLIYSL. Residues 309–326 are Cytoplasmic-facing; that stretch reads RNKEVKAAVQKTLRGKLF.

Belongs to the G-protein coupled receptor 1 family.

The protein localises to the cell membrane. Functionally, odorant receptor. In Homo sapiens (Human), this protein is Olfactory receptor 8A1 (OR8A1).